Here is a 256-residue protein sequence, read N- to C-terminus: Probable cyclic nucleotide phosphodiesterase Fisuc_1441/FSU_1912 (256 aa).

Fe cation is bound by residues D20, H22, D59, N89, H156, H196, and H198. AMP-binding positions include H22, D59, and 89–90; that span reads NH. An AMP-binding site is contributed by H198.

It belongs to the cyclic nucleotide phosphodiesterase class-III family. Fe(2+) serves as cofactor.

This chain is Probable cyclic nucleotide phosphodiesterase Fisuc_1441/FSU_1912, found in Fibrobacter succinogenes (strain ATCC 19169 / S85).